Here is a 272-residue protein sequence, read N- to C-terminus: NH(3)-dependent NAD(+) synthetase (272 aa).

45-52 (GISGGQDS) provides a ligand contact to ATP. Mg(2+) is bound at residue Asp-51. Arg-138 is a deamido-NAD(+) binding site. Thr-158 provides a ligand contact to ATP. Glu-163 lines the Mg(2+) pocket. The deamido-NAD(+) site is built by Lys-171 and Asp-178. Positions 187 and 209 each coordinate ATP. 258-259 (HK) contacts deamido-NAD(+).

It belongs to the NAD synthetase family. In terms of assembly, homodimer.

The enzyme catalyses deamido-NAD(+) + NH4(+) + ATP = AMP + diphosphate + NAD(+) + H(+). The protein operates within cofactor biosynthesis; NAD(+) biosynthesis; NAD(+) from deamido-NAD(+) (ammonia route): step 1/1. Catalyzes the ATP-dependent amidation of deamido-NAD to form NAD. Uses ammonia as a nitrogen source. This Bacillus cereus (strain G9842) protein is NH(3)-dependent NAD(+) synthetase.